A 270-amino-acid chain; its full sequence is SPbeta prophage-derived DNA ligase-like protein LigB (270 aa).

The active-site N6-AMP-lysine intermediate is the Lys25.

It belongs to the ATP-dependent DNA ligase family.

This chain is SPbeta prophage-derived DNA ligase-like protein LigB (ligB), found in Bacillus subtilis (strain 168).